A 334-amino-acid polypeptide reads, in one-letter code: Serine/threonine-protein kinase SAPK3 (334 aa).

Positions 5 to 261 (YEALKELGAG…IPEIKKHTWF (257 aa)) constitute a Protein kinase domain. Residues 11–19 (LGAGNFGVA) and lysine 34 contribute to the ATP site. Aspartate 124 acts as the Proton acceptor in catalysis.

It belongs to the protein kinase superfamily. Ser/Thr protein kinase family. In terms of processing, autophosphorylated in presence of Ca(2+). In terms of tissue distribution, expressed in leaves and maturing seeds, but not in roots and stems of field-grown plants.

Its subcellular location is the cytoplasm. It is found in the nucleus. The catalysed reaction is L-seryl-[protein] + ATP = O-phospho-L-seryl-[protein] + ADP + H(+). It carries out the reaction L-threonyl-[protein] + ATP = O-phospho-L-threonyl-[protein] + ADP + H(+). With respect to regulation, activated by phosphorylation. May play a role in signal transduction of hyperosmotic response. The protein is Serine/threonine-protein kinase SAPK3 (SAPK3) of Oryza sativa subsp. indica (Rice).